A 154-amino-acid chain; its full sequence is Interleukin-2 (154 aa).

An N-terminal signal peptide occupies residues 1-20; the sequence is MYKLQLLSCIALTLALVANS. A glycan (O-linked (GalNAc...) threonine) is linked at T23. A disulfide bridge connects residues C78 and C126.

It belongs to the IL-2 family.

The protein resides in the secreted. In terms of biological role, cytokine produced by activated CD4-positive helper T-cells and to a lesser extend activated CD8-positive T-cells and natural killer (NK) cells that plays pivotal roles in the immune response and tolerance. Binds to a receptor complex composed of either the high-affinity trimeric IL-2R (IL2RA/CD25, IL2RB/CD122 and IL2RG/CD132) or the low-affinity dimeric IL-2R (IL2RB and IL2RG). Interaction with the receptor leads to oligomerization and conformation changes in the IL-2R subunits resulting in downstream signaling starting with phosphorylation of JAK1 and JAK3. In turn, JAK1 and JAK3 phosphorylate the receptor to form a docking site leading to the phosphorylation of several substrates including STAT5. This process leads to activation of several pathways including STAT, phosphoinositide-3-kinase/PI3K and mitogen-activated protein kinase/MAPK pathways. Functions as a T-cell growth factor and can increase NK-cell cytolytic activity as well. Promotes strong proliferation of activated B-cells and subsequently immunoglobulin production. Plays a pivotal role in regulating the adaptive immune system by controlling the survival and proliferation of regulatory T-cells, which are required for the maintenance of immune tolerance. Moreover, participates in the differentiation and homeostasis of effector T-cell subsets, including Th1, Th2, Th17 as well as memory CD8-positive T-cells. The polypeptide is Interleukin-2 (IL2) (Lama glama (Llama)).